Consider the following 122-residue polypeptide: Large ribosomal subunit protein uL14 (122 aa).

This sequence belongs to the universal ribosomal protein uL14 family. In terms of assembly, part of the 50S ribosomal subunit. Forms a cluster with proteins L3 and L19. In the 70S ribosome, L14 and L19 interact and together make contacts with the 16S rRNA in bridges B5 and B8.

Binds to 23S rRNA. Forms part of two intersubunit bridges in the 70S ribosome. In Chloroherpeton thalassium (strain ATCC 35110 / GB-78), this protein is Large ribosomal subunit protein uL14.